The following is a 103-amino-acid chain: Small ribosomal subunit protein uS10 (103 aa).

The protein belongs to the universal ribosomal protein uS10 family. Part of the 30S ribosomal subunit.

Involved in the binding of tRNA to the ribosomes. This Chromobacterium violaceum (strain ATCC 12472 / DSM 30191 / JCM 1249 / CCUG 213 / NBRC 12614 / NCIMB 9131 / NCTC 9757 / MK) protein is Small ribosomal subunit protein uS10.